Consider the following 269-residue polypeptide: Chromosome-partitioning protein Spo0J (269 aa).

The interval 1–20 (MSRKPSGLGRGLEALLPKTG) is stimulates ATPase activity of Soj by 8%. Residues 137–156 (QEEVARRVGKARSTVANALR) constitute a DNA-binding region (H-T-H motif). Residues 223-269 (PSPLSLELSRHLGLPVRVVGGKKGKVVIQYRSLEELEALLRRLGYQA) form a required for DNA-binding; may be responsible for dimerization region.

It belongs to the ParB family. As to quaternary structure, homodimer, probably via the C-terminal 46 residues. Dimerization of the N-terminal H-T-H region may require DNA-binding. Probably interacts with ATPase Soj.

Its function is as follows. Probably involved in chromosome partitioning. Binds to a plasmid centromere-like site parS. Stimulates the ATPase activity 10-fold of Soj; the first 20 residues may be responsible. This chain is Chromosome-partitioning protein Spo0J (spo0C), found in Thermus thermophilus (strain ATCC BAA-163 / DSM 7039 / HB27).